A 145-amino-acid polypeptide reads, in one-letter code: MSEFVKPFNNDPFVGNLSTPVTTSTATKLYLGNLPIYRKGLTPLLRGLEIGMAHGYFLIGPFYILGPLRNSPNALLVGLFSAFGLIIILTLALTIYGLASFQDNGVGENLESSKGWRNFTSGFTIGALGGASVAYLVLNNISFFA.

Helical transmembrane passes span 48 to 68 (LEIGMAHGYFLIGPFYILGPL), 75 to 95 (LLVGLFSAFGLIIILTLALTI), and 125 to 145 (IGALGGASVAYLVLNNISFFA).

Belongs to the PsaL family.

The protein resides in the plastid. It is found in the chloroplast thylakoid membrane. This is Photosystem I reaction center subunit XI from Isochrysis galbana (Marine planktonic alga).